We begin with the raw amino-acid sequence, 118 residues long: Protein YLR162W (118 aa).

Over residues 1–20 the composition is skewed to polar residues; the sequence is MQHTLTRTASLPERSSSAHS. A disordered region spans residues 1-26; the sequence is MQHTLTRTASLPERSSSAHSAATALP. The chain crosses the membrane as a helical span at residues 38 to 58; sequence LVPLLCIFWFVFVSMSPLPPA.

It is found in the membrane. Its function is as follows. Overexpression confers resistance to the antimicrobial peptide MiAMP1. The sequence is that of Protein YLR162W from Saccharomyces cerevisiae (strain ATCC 204508 / S288c) (Baker's yeast).